Here is a 308-residue protein sequence, read N- to C-terminus: Glycerol-3-phosphate dehydrogenase [NAD(P)+] (308 aa).

NADPH contacts are provided by Trp-13, Arg-33, and Lys-81. The sn-glycerol 3-phosphate site is built by Lys-81 and Gly-109. NADPH is bound at residue Ala-113. Residues Lys-163, Asp-216, Ser-226, Arg-227, and Asn-228 each coordinate sn-glycerol 3-phosphate. Lys-163 acts as the Proton acceptor in catalysis. Position 227 (Arg-227) interacts with NADPH. Glu-253 contributes to the NADPH binding site.

The protein belongs to the NAD-dependent glycerol-3-phosphate dehydrogenase family.

It localises to the cytoplasm. The catalysed reaction is sn-glycerol 3-phosphate + NAD(+) = dihydroxyacetone phosphate + NADH + H(+). It carries out the reaction sn-glycerol 3-phosphate + NADP(+) = dihydroxyacetone phosphate + NADPH + H(+). It participates in membrane lipid metabolism; glycerophospholipid metabolism. Catalyzes the reduction of the glycolytic intermediate dihydroxyacetone phosphate (DHAP) to sn-glycerol 3-phosphate (G3P), the key precursor for phospholipid synthesis. This Thermosynechococcus vestitus (strain NIES-2133 / IAM M-273 / BP-1) protein is Glycerol-3-phosphate dehydrogenase [NAD(P)+].